Consider the following 308-residue polypeptide: Staphylococcal superantigen-like 4 (308 aa).

The N-terminal stretch at 1–30 (MKITTIAKTSLALGLLTTGVITTTTQAANA) is a signal peptide. The interval 32 to 117 (TLSSTKVEAP…TTKQVPTEIN (86 aa)) is disordered. 2 stretches are compositionally biased toward polar residues: residues 33-47 (LSST…TPPS) and 55-76 (SKPN…TANA). Residues 77 to 93 (TTPPSTKVTTPPSTNTP) show a composition bias toward low complexity. A compositionally biased stretch (polar residues) spans 94-114 (QPMQSTKSDTPQSPTTKQVPT). The segment at 180–278 (VDVFVVLEEN…VIKMKNGGKY (99 aa)) is sialyl Lewis X-binding.

The protein belongs to the staphylococcal/streptococcal toxin family.

It is found in the secreted. In terms of biological role, secreted protein that plays a role in immune innate response inhibition by interfering with host TLR2-mediated pathway. The chain is Staphylococcal superantigen-like 4 from Staphylococcus aureus (strain NCTC 8325 / PS 47).